The primary structure comprises 490 residues: Glutamate--tRNA ligase 1 (490 aa).

The 'HIGH' region signature appears at 27–37; it reads PSPTGYLHIGG. Positions 254-258 match the 'KMSKS' region motif; it reads KLSKR. Lysine 257 serves as a coordination point for ATP.

It belongs to the class-I aminoacyl-tRNA synthetase family. Glutamate--tRNA ligase type 1 subfamily. In terms of assembly, monomer.

The protein localises to the cytoplasm. It carries out the reaction tRNA(Glu) + L-glutamate + ATP = L-glutamyl-tRNA(Glu) + AMP + diphosphate. Functionally, catalyzes the attachment of glutamate to tRNA(Glu) in a two-step reaction: glutamate is first activated by ATP to form Glu-AMP and then transferred to the acceptor end of tRNA(Glu). This chain is Glutamate--tRNA ligase 1, found in Sphingopyxis alaskensis (strain DSM 13593 / LMG 18877 / RB2256) (Sphingomonas alaskensis).